Consider the following 172-residue polypeptide: Epididymal secretory protein 4 (172 aa).

The signal sequence occupies residues 1-21; the sequence is MIAVLLLVFGMTPDYIFPVSA. A disulfide bridge links Cys-82 with Cys-167.

The protein belongs to the calycin superfamily. Lipocalin family. In terms of tissue distribution, secreted by the epididymal epithelial cells.

It localises to the secreted. The protein resides in the extracellular space. Functionally, could transport small hydrophobic molecules into the epididymal fluid during the sperm maturation. Binds to the head region of spermatozoa and plays a key role in sperm maturation. In Zootoca vivipara (Common lizard), this protein is Epididymal secretory protein 4.